The sequence spans 340 residues: N-acetyl-gamma-glutamyl-phosphate reductase (340 aa).

Cysteine 146 is an active-site residue.

It belongs to the NAGSA dehydrogenase family. Type 1 subfamily.

It localises to the cytoplasm. It catalyses the reaction N-acetyl-L-glutamate 5-semialdehyde + phosphate + NADP(+) = N-acetyl-L-glutamyl 5-phosphate + NADPH + H(+). It participates in amino-acid biosynthesis; L-arginine biosynthesis; N(2)-acetyl-L-ornithine from L-glutamate: step 3/4. In terms of biological role, catalyzes the NADPH-dependent reduction of N-acetyl-5-glutamyl phosphate to yield N-acetyl-L-glutamate 5-semialdehyde. In Streptococcus gordonii (strain Challis / ATCC 35105 / BCRC 15272 / CH1 / DL1 / V288), this protein is N-acetyl-gamma-glutamyl-phosphate reductase.